We begin with the raw amino-acid sequence, 239 residues long: MRLPPLQAAKFIRRYKRFMADVELANGNILTIHCANTGAMTGCAEKGDTVWYSDSKSTTRKYPCSWELTELSNGNLVCINTHRSNQLVQEALQNKVIKELAGYSEIYPEVKYGEENSRIDFLLKGEGLPDCYVEVKSITLVKNNIGMFPDAVTTRGQKHVRELLAMKKQGYRAVVLFAGLHNGFDCFKTAEYIDPDYDKLLRQAMKEGVEVYAYAGKFDKIQEIPTALSLAEVVPLCFN.

This sequence belongs to the SfsA family.

The chain is Sugar fermentation stimulation protein homolog from Mannheimia succiniciproducens (strain KCTC 0769BP / MBEL55E).